A 103-amino-acid polypeptide reads, in one-letter code: Isocitrate dehydrogenase [NAD] subunit beta, mitochondrial (103 aa).

It belongs to the isocitrate and isopropylmalate dehydrogenases family. As to quaternary structure, heterooligomer of subunits alpha (IDH3A), beta (IDH3B), and gamma (IDH3G) in the apparent ratio of 2:1:1. The heterodimer containing one IDH3A and one IDH3B subunit and the heterodimer containing one IDH3A and one IDH3G subunit assemble into a heterotetramer (which contains two subunits of IDH3A, one of IDH3B and one of IDH3G) and further into the heterooctamer.

It is found in the mitochondrion. With respect to regulation, the heterotetramer and the heterodimer composed of IDH3A and IDH3G subunits can be allosterically activated by citrate (CIT) or/and ADP, and the two activators can act independently or synergistically. The heterodimer composed of IDH3A and IDH3B subunits cannot be allosterically regulated and the allosteric regulation of the heterotetramer is through the IDH3G subunit and not the IDH3B subunit. The IDH3G subunit contains the allosteric site which consists of a CIT-binding site and an ADP-binding site, and the binding of CIT and ADP causes conformational changes at the allosteric site which are transmitted to the active site in the catalytic subunit (IDH3A) through a cascade of conformational changes at the heterodimer interface, leading to stabilization of the isocitrate-binding at the active site and thus activation of the enzyme. ATP can activate the heterotetramer and the heterodimer composed of IDH3A and IDH3G subunits at low concentrations but inhibits their activities at high concentrations, whereas ATP exhibits only inhibitory effect on the heterodimer composed of IDH3A and IDH3B subunits. Plays a structural role to facilitate the assembly and ensure the full activity of the enzyme catalyzing the decarboxylation of isocitrate (ICT) into alpha-ketoglutarate. The heterodimer composed of the alpha (IDH3A) and beta (IDH3B) subunits and the heterodimer composed of the alpha (IDH3A) and gamma (IDH3G) subunits, have considerable basal activity but the full activity of the heterotetramer (containing two subunits of IDH3A, one of IDH3B and one of IDH3G) requires the assembly and cooperative function of both heterodimers. This chain is Isocitrate dehydrogenase [NAD] subunit beta, mitochondrial (IDH3B), found in Sus scrofa (Pig).